A 536-amino-acid polypeptide reads, in one-letter code: Glutamyl-tRNA(Gln) amidotransferase subunit B, mitochondrial (536 aa).

The protein belongs to the GatB/GatE family. GatB subfamily. In terms of assembly, subunit of the heterotrimeric GatFAB amidotransferase (AdT) complex, composed of A, B and F subunits.

It is found in the mitochondrion. It catalyses the reaction L-glutamyl-tRNA(Gln) + L-glutamine + ATP + H2O = L-glutaminyl-tRNA(Gln) + L-glutamate + ADP + phosphate + H(+). Allows the formation of correctly charged Gln-tRNA(Gln) through the transamidation of misacylated Glu-tRNA(Gln) in the mitochondria. The reaction takes place in the presence of glutamine and ATP through an activated gamma-phospho-Glu-tRNA(Gln). The chain is Glutamyl-tRNA(Gln) amidotransferase subunit B, mitochondrial from Vanderwaltozyma polyspora (strain ATCC 22028 / DSM 70294 / BCRC 21397 / CBS 2163 / NBRC 10782 / NRRL Y-8283 / UCD 57-17) (Kluyveromyces polysporus).